The primary structure comprises 98 residues: Acylphosphatase-1 (98 aa).

The 91-residue stretch at 8 to 98 folds into the Acylphosphatase-like domain; it reads SVDYEVFGKV…LEHSTFSICK (91 aa). Active-site residues include arginine 23 and asparagine 41.

Belongs to the acylphosphatase family.

The enzyme catalyses an acyl phosphate + H2O = a carboxylate + phosphate + H(+). This is Acylphosphatase-1 (acyp1) from Xenopus tropicalis (Western clawed frog).